A 375-amino-acid chain; its full sequence is Muconate cycloisomerase 1 (375 aa).

Lys171 serves as the catalytic Proton acceptor. The Mn(2+) site is built by Asp200, Glu226, and Asp251. Catalysis depends on Glu329, which acts as the Proton donor.

It belongs to the mandelate racemase/muconate lactonizing enzyme family. Homooctamer. The cofactor is Mn(2+).

It carries out the reaction (S)-muconolactone = cis,cis-muconate + H(+). The protein operates within aromatic compound metabolism; beta-ketoadipate pathway; 5-oxo-4,5-dihydro-2-furylacetate from catechol: step 2/3. Functionally, catalyzes a syn cycloisomerization. This is Muconate cycloisomerase 1 (catB) from Pseudomonas putida (Arthrobacter siderocapsulatus).